Reading from the N-terminus, the 778-residue chain is Endonuclease MutS2 (778 aa).

An ATP-binding site is contributed by Gly-328–Thr-335. The Smr domain maps to Leu-703 to Gly-778.

The protein belongs to the DNA mismatch repair MutS family. MutS2 subfamily. Homodimer. Binds to stalled ribosomes, contacting rRNA.

Its function is as follows. Endonuclease that is involved in the suppression of homologous recombination and thus may have a key role in the control of bacterial genetic diversity. Functionally, acts as a ribosome collision sensor, splitting the ribosome into its 2 subunits. Detects stalled/collided 70S ribosomes which it binds and splits by an ATP-hydrolysis driven conformational change. Acts upstream of the ribosome quality control system (RQC), a ribosome-associated complex that mediates the extraction of incompletely synthesized nascent chains from stalled ribosomes and their subsequent degradation. Probably generates substrates for RQC. This chain is Endonuclease MutS2, found in Streptococcus equi subsp. zooepidemicus (strain H70).